Here is a 236-residue protein sequence, read N- to C-terminus: Three prime repair exonuclease 2 (236 aa).

2 residues coordinate Mg(2+): Asp-14 and Glu-16. Substrate contacts are provided by residues Glu-16 to Ala-17 and Tyr-122. His-188 (proton donor/acceptor) is an active-site residue. Position 193 (Asp-193) interacts with Mg(2+). Substrate is bound at residue Asp-193.

The protein belongs to the exonuclease superfamily. TREX family. Homodimer. It depends on Mg(2+) as a cofactor. As to expression, detected in heart, breast, prostate, skeletal muscle, testis, uterus, bone marrow, colon, small intestine, stomach and thymus.

The protein localises to the nucleus. It carries out the reaction Exonucleolytic cleavage in the 3'- to 5'-direction to yield nucleoside 5'-phosphates.. In terms of biological role, exonuclease with a preference for double-stranded DNA with mismatched 3' termini. May play a role in DNA repair. The protein is Three prime repair exonuclease 2 (TREX2) of Homo sapiens (Human).